A 360-amino-acid polypeptide reads, in one-letter code: Phosphoserine aminotransferase (360 aa).

Arg-42 is an L-glutamate binding site. Residues Trp-102, Thr-152, Asp-171, and Gln-194 each coordinate pyridoxal 5'-phosphate. Lys-195 is modified (N6-(pyridoxal phosphate)lysine). A pyridoxal 5'-phosphate-binding site is contributed by 237–238 (NT).

The protein belongs to the class-V pyridoxal-phosphate-dependent aminotransferase family. SerC subfamily. Homodimer. It depends on pyridoxal 5'-phosphate as a cofactor.

It localises to the cytoplasm. It catalyses the reaction O-phospho-L-serine + 2-oxoglutarate = 3-phosphooxypyruvate + L-glutamate. The catalysed reaction is 4-(phosphooxy)-L-threonine + 2-oxoglutarate = (R)-3-hydroxy-2-oxo-4-phosphooxybutanoate + L-glutamate. The protein operates within amino-acid biosynthesis; L-serine biosynthesis; L-serine from 3-phospho-D-glycerate: step 2/3. Its pathway is cofactor biosynthesis; pyridoxine 5'-phosphate biosynthesis; pyridoxine 5'-phosphate from D-erythrose 4-phosphate: step 3/5. In terms of biological role, catalyzes the reversible conversion of 3-phosphohydroxypyruvate to phosphoserine and of 3-hydroxy-2-oxo-4-phosphonooxybutanoate to phosphohydroxythreonine. In Coxiella burnetii (strain RSA 493 / Nine Mile phase I), this protein is Phosphoserine aminotransferase.